Reading from the N-terminus, the 231-residue chain is RNA pyrophosphohydrolase (231 aa).

Residues 6–149 form the Nudix hydrolase domain; sequence GFRPNVGIIL…KRDVYQLALT (144 aa). A Nudix box motif is present at residues 38–59; it reads GGIKYGETPVQAMYRELHEETG. The segment at 157–190 is disordered; it reads RPQPRTERPGGHHHGQRYPRMASSVNAPPGASMA.

It belongs to the Nudix hydrolase family. RppH subfamily. It depends on a divalent metal cation as a cofactor.

Functionally, accelerates the degradation of transcripts by removing pyrophosphate from the 5'-end of triphosphorylated RNA, leading to a more labile monophosphorylated state that can stimulate subsequent ribonuclease cleavage. The chain is RNA pyrophosphohydrolase from Paraburkholderia phymatum (strain DSM 17167 / CIP 108236 / LMG 21445 / STM815) (Burkholderia phymatum).